The sequence spans 408 residues: Histidine--tRNA ligase (408 aa).

Belongs to the class-II aminoacyl-tRNA synthetase family. As to quaternary structure, homodimer.

It is found in the cytoplasm. It carries out the reaction tRNA(His) + L-histidine + ATP = L-histidyl-tRNA(His) + AMP + diphosphate + H(+). The chain is Histidine--tRNA ligase from Campylobacter jejuni subsp. jejuni serotype O:2 (strain ATCC 700819 / NCTC 11168).